The primary structure comprises 238 residues: Partner of Y14 and mago (238 aa).

The tract at residues 1-183 (MTTYATDSQG…GADGHSDLSK (183 aa)) is disordered. Composition is skewed to basic and acidic residues over residues 65-77 (QKAREKREKEQRK) and 123-133 (LEQKQKEEQKA). Over residues 136-155 (RQQAQDQRNSKQQQSQNQSK) the composition is skewed to low complexity. Residues 176–233 (DGHSDLSKKLRKLRKKIREIEVIEERLRASDGPRPDKDQIEKAKRKAEILKEIEELER) are a coiled coil.

This sequence belongs to the pym family. As to quaternary structure, interacts (via N-terminus) with mago and tsu/Y14; the interaction is direct.

It is found in the cytoplasm. The protein resides in the nucleus. Its function is as follows. Regulator of the exon junction complex (EJC), a multiprotein complex that associates immediately upstream of the exon-exon junction on mRNAs and serves as a positional landmarks for the intron exon structure of genes and directs post-transcriptional processes in the cytoplasm such as mRNA export, nonsense-mediated mRNA decay (NMD) or translation. This Culex quinquefasciatus (Southern house mosquito) protein is Partner of Y14 and mago.